The primary structure comprises 255 residues: H-2 class II histocompatibility antigen, E-U alpha chain (255 aa).

A signal peptide spans 1 to 25 (MATIGALLLRFFFIAVLMSSQKSWA). Residues 26–109 (IKEEHTIIQA…KRSNNTPDAN (84 aa)) are alpha-1. Residues 26 to 217 (IKEEHTIIQA…KTLLPETKEN (192 aa)) are Extracellular-facing. The alpha-2 stretch occupies residues 110-203 (VAPEVTVLSR…GLEEPLRKHW (94 aa)). The Ig-like C1-type domain occupies 112–204 (PEVTVLSRSP…LEEPLRKHWE (93 aa)). Cysteine 132 and cysteine 188 are joined by a disulfide. N-linked (GlcNAc...) asparagine glycosylation occurs at asparagine 143. Residues 204 to 216 (EFEEKTLLPETKE) are connecting peptide. Residues 218–238 (VVCALGLFVGLVGIVVGIILI) traverse the membrane as a helical segment. Topologically, residues 239 to 255 (MKGIKKRNVVERRQGAL) are cytoplasmic.

It belongs to the MHC class II family.

Its subcellular location is the membrane. This Mus musculus (Mouse) protein is H-2 class II histocompatibility antigen, E-U alpha chain (H2-Ea).